Here is a 250-residue protein sequence, read N- to C-terminus: Testis-expressed protein 101 (250 aa).

The first 25 residues, 1 to 25, serve as a signal peptide directing secretion; the sequence is MGACRIQYILLVFLLIASHWTLVQN. 4 N-linked (GlcNAc...) asparagine glycosylation sites follow: Asn-45, Asn-110, Asn-134, and Asn-160. The region spanning 141 to 215 is the UPAR/Ly6 domain; that stretch reads CPTCLALEPC…VKETCSYQSF (75 aa). A lipid anchor (GPI-anchor amidated glycine) is attached at Gly-224. Residues 225 to 250 constitute a propeptide, removed in mature form; the sequence is ASWMPTSLWVLELLLPALSLPLIYFP.

As to quaternary structure, interacts with VAMP3. Interacts with LY6K. Interacts with DPEP3; co-localized on the cell surface of spermatocytes, spermatids, and testicular spermatozoa, co-localized only in cytoplasmic droplets of caput and corpus epididymal sperm. Interacts with ADAM5. Post-translationally, N-glycosylated; by high mannose and/or biantennary complex and/or certain types of hybrid oligosaccharides; possesses different oligosaccharides chains according to its subcellular localization in the testis. Sheds from membrane raft by ACE and released from the cell surface of epididymal sperm while it passes through the caput epididymis leading to disappearance of TEX101 on spermatozoa; is essential to produce fertile spermatozoa. Detected in testis.

The protein localises to the cell membrane. The protein resides in the membrane raft. Its subcellular location is the cytoplasmic vesicle. It is found in the secretory vesicle. It localises to the acrosome. The protein localises to the secreted. In terms of biological role, plays a role in fertilization by controlling binding of sperm to zona pellucida and migration of spermatozoa into the oviduct. May play a role in signal transduction and promote protein tyrosine phosphorylation. The protein is Testis-expressed protein 101 of Rattus norvegicus (Rat).